Reading from the N-terminus, the 75-residue chain is Small ribosomal subunit protein eS17 (75 aa).

Belongs to the eukaryotic ribosomal protein eS17 family.

The chain is Small ribosomal subunit protein eS17 from Thermoplasma volcanium (strain ATCC 51530 / DSM 4299 / JCM 9571 / NBRC 15438 / GSS1).